The chain runs to 256 residues: Histone H1 (256 aa).

2 stretches are compositionally biased toward low complexity: residues 1–19 (MSDS…PPAT) and 27–43 (KKAS…ASAT). 2 disordered regions span residues 1–53 (MSDS…QQMV) and 108–256 (GKGA…AAKK). A Phosphoserine modification is found at Ser11. Residues 45–119 (SHPPTQQMVD…GASGSFKLSA (75 aa)) enclose the H15 domain. Basic and acidic residues-rich tracts occupy residues 121-140 (AKKE…EKKV) and 176-193 (KTAE…DAKK). The span at 194 to 229 (TGIIKSKPAATKAKVTAAKPKAVVAKASKAKPAVSA) shows a compositional bias: low complexity. The span at 245–256 (KKPKAKTTAAKK) shows a compositional bias: basic residues.

The protein belongs to the histone H1/H5 family. Phosphorylated in oocytes during prophase I of meiosis.

Its subcellular location is the nucleus. It localises to the chromosome. Functionally, histones H1 are necessary for the condensation of nucleosome chains into higher-order structures. This is Histone H1 (His1) from Drosophila melanogaster (Fruit fly).